A 428-amino-acid chain; its full sequence is Chaperone SurA (428 aa).

The signal sequence occupies residues 1–13 (MLGALLLSGAVHA). PpiC domains are found at residues 164-265 (SEEF…KLLE) and 276-375 (RDEV…EVLG).

It is found in the periplasm. The catalysed reaction is [protein]-peptidylproline (omega=180) = [protein]-peptidylproline (omega=0). Chaperone involved in the correct folding and assembly of outer membrane proteins. Recognizes specific patterns of aromatic residues and the orientation of their side chains, which are found more frequently in integral outer membrane proteins. May act in both early periplasmic and late outer membrane-associated steps of protein maturation. The chain is Chaperone SurA from Pseudomonas syringae pv. tomato (strain ATCC BAA-871 / DC3000).